Here is an 81-residue protein sequence, read N- to C-terminus: Acyl carrier protein (81 aa).

The region spanning 2-77 (ASIEERVVDI…EAIDFIEKEK (76 aa)) is the Carrier domain. Ser37 carries the post-translational modification O-(pantetheine 4'-phosphoryl)serine.

Belongs to the acyl carrier protein (ACP) family. Post-translationally, 4'-phosphopantetheine is transferred from CoA to a specific serine of apo-ACP by AcpS. This modification is essential for activity because fatty acids are bound in thioester linkage to the sulfhydryl of the prosthetic group.

It localises to the cytoplasm. It functions in the pathway lipid metabolism; fatty acid biosynthesis. In terms of biological role, carrier of the growing fatty acid chain in fatty acid biosynthesis. This chain is Acyl carrier protein, found in Rhodopirellula baltica (strain DSM 10527 / NCIMB 13988 / SH1).